A 495-amino-acid polypeptide reads, in one-letter code: Glycerol kinase (495 aa).

Residue threonine 13 participates in ADP binding. ATP-binding residues include threonine 13, threonine 14, and serine 15. Threonine 13 contributes to the sn-glycerol 3-phosphate binding site. Arginine 17 provides a ligand contact to ADP. The sn-glycerol 3-phosphate site is built by arginine 83, glutamate 84, tyrosine 135, and aspartate 244. Glycerol-binding residues include arginine 83, glutamate 84, tyrosine 135, aspartate 244, and glutamine 245. Residues threonine 266 and glycine 309 each contribute to the ADP site. ATP-binding residues include threonine 266, glycine 309, glutamine 313, and glycine 410. 2 residues coordinate ADP: glycine 410 and asparagine 414.

This sequence belongs to the FGGY kinase family.

It catalyses the reaction glycerol + ATP = sn-glycerol 3-phosphate + ADP + H(+). It participates in polyol metabolism; glycerol degradation via glycerol kinase pathway; sn-glycerol 3-phosphate from glycerol: step 1/1. Inhibited by fructose 1,6-bisphosphate (FBP). Its function is as follows. Key enzyme in the regulation of glycerol uptake and metabolism. Catalyzes the phosphorylation of glycerol to yield sn-glycerol 3-phosphate. The protein is Glycerol kinase of Shewanella woodyi (strain ATCC 51908 / MS32).